The sequence spans 115 residues: Beta-2-microglobulin (115 aa).

An N-terminal signal peptide occupies residues 1–18 (MGLLICSLLLGLLCCSMA). Residues 23 to 114 (PKVEVYTREP…KSKDHFLMIG (92 aa)) form the Ig-like C1-type domain.

The protein belongs to the beta-2-microglobulin family. Heterodimer of an alpha chain and a beta chain. Beta-2-microglobulin is the beta-chain of major histocompatibility complex class I molecules.

It is found in the secreted. Component of the class I major histocompatibility complex (MHC). Involved in the presentation of peptide antigens to the immune system. The sequence is that of Beta-2-microglobulin (b2m) from Paralichthys olivaceus (Bastard halibut).